The primary structure comprises 46 residues: Protein YpdJ (46 aa).

May be involved in H(2) production during fermentative growth. In Escherichia coli (strain K12), this protein is Protein YpdJ (ypdJ).